The sequence spans 557 residues: Dihydroxy-acid dehydratase (557 aa).

A [2Fe-2S] cluster-binding site is contributed by C50. D82 is a Mg(2+) binding site. Position 123 (C123) interacts with [2Fe-2S] cluster. Residues D124 and K125 each contribute to the Mg(2+) site. K125 carries the N6-carboxylysine modification. C195 contributes to the [2Fe-2S] cluster binding site. E447 is a binding site for Mg(2+). S473 functions as the Proton acceptor in the catalytic mechanism.

This sequence belongs to the IlvD/Edd family. Homodimer. [2Fe-2S] cluster is required as a cofactor. It depends on Mg(2+) as a cofactor.

The enzyme catalyses (2R)-2,3-dihydroxy-3-methylbutanoate = 3-methyl-2-oxobutanoate + H2O. It carries out the reaction (2R,3R)-2,3-dihydroxy-3-methylpentanoate = (S)-3-methyl-2-oxopentanoate + H2O. The protein operates within amino-acid biosynthesis; L-isoleucine biosynthesis; L-isoleucine from 2-oxobutanoate: step 3/4. Its pathway is amino-acid biosynthesis; L-valine biosynthesis; L-valine from pyruvate: step 3/4. Functions in the biosynthesis of branched-chain amino acids. Catalyzes the dehydration of (2R,3R)-2,3-dihydroxy-3-methylpentanoate (2,3-dihydroxy-3-methylvalerate) into 2-oxo-3-methylpentanoate (2-oxo-3-methylvalerate) and of (2R)-2,3-dihydroxy-3-methylbutanoate (2,3-dihydroxyisovalerate) into 2-oxo-3-methylbutanoate (2-oxoisovalerate), the penultimate precursor to L-isoleucine and L-valine, respectively. The polypeptide is Dihydroxy-acid dehydratase (Nitrosomonas europaea (strain ATCC 19718 / CIP 103999 / KCTC 2705 / NBRC 14298)).